A 309-amino-acid chain; its full sequence is Dicarboxylate carrier UCP2 (309 aa).

Over 1 to 16 (MVGFKATDVPPTATVK) the chain is Mitochondrial intermembrane. 3 Solcar repeats span residues 11–106 (PTAT…VKQF), 114–203 (AGIG…IKDT), and 212–297 (DDLP…LKRA). Positions 16–63 (KFLGAGTAACIADLITFPLDTAKVRLQIQGESQGLARTAASAQYRGVL) are important for interaction with long-chain fatty acids. The chain crosses the membrane as a helical span at residues 17-40 (FLGAGTAACIADLITFPLDTAKVR). Residues 41 to 77 (LQIQGESQGLARTAASAQYRGVLGTILTMVRTEGPRS) are Mitochondrial matrix-facing. A helical membrane pass occupies residues 78 to 103 (LYNGLVAGLQRQMSFASVRIGLYDSV). Residues 104 to 119 (KQFYTKGSEHAGIGSR) are Mitochondrial intermembrane-facing. Residues 120-145 (LLAGSTTGALAVAVAQPTDVVKVRFQ) traverse the membrane as a helical segment. Residues 146 to 173 (AQARAGGGRRYQSTVEAYKTIAREEGIR) lie on the Mitochondrial matrix side of the membrane. Residues 174 to 199 (GLWKGTSPNVARNAIVNCTELVTYDL) form a helical membrane-spanning segment. Residues 200-217 (IKDTLLKANLMTDDLPCH) lie on the Mitochondrial intermembrane side of the membrane. The helical transmembrane segment at 218–242 (FTSAFGAGFCTTVIASPVDVVKTRY) threads the bilayer. Residues 243–268 (MNSALGQYHSAGHCALTMLRKEGPRA) are Mitochondrial matrix-facing. A helical transmembrane segment spans residues 269 to 294 (FYKGFMPSFLRLGSWNVVMFVTYEQL). The interval 278–285 (LRLGSWNV) is important for interaction with long-chain fatty acids. At 295–309 (KRALMAAYESREAPF) the chain is on the mitochondrial intermembrane side.

Belongs to the mitochondrial carrier (TC 2.A.29) family. Homotetramer. Adopts an asymmetrical dimer of dimers functional form. Interacts with MICU1 (when methylated); leading to decrease the calcium sensitivity of MICU1. Expressed in a variety of organs, with predominant expression in the heart, lung and spleen.

Its subcellular location is the mitochondrion inner membrane. It carries out the reaction L-aspartate(out) + phosphate(in) + H(+)(in) = L-aspartate(in) + phosphate(out) + H(+)(out). The catalysed reaction is oxaloacetate(out) + phosphate(in) + H(+)(in) = oxaloacetate(in) + phosphate(out) + H(+)(out). The enzyme catalyses (S)-malate(out) + phosphate(in) + H(+)(in) = (S)-malate(in) + phosphate(out) + H(+)(out). It catalyses the reaction malonate(out) + phosphate(in) + H(+)(in) = malonate(in) + phosphate(out) + H(+)(out). It carries out the reaction sulfate(out) + phosphate(in) + H(+)(in) = sulfate(in) + phosphate(out) + H(+)(out). The catalysed reaction is (S)-malate(out) = (S)-malate(in). The enzyme catalyses L-aspartate(out) = L-aspartate(in). It catalyses the reaction phosphate(in) = phosphate(out). It carries out the reaction chloride(in) = chloride(out). The catalysed reaction is H(+)(in) = H(+)(out). The enzyme catalyses a long-chain fatty acid(out) = a long-chain fatty acid(in). Antiporter that exports dicarboxylate intermediates of the Krebs cycle in exchange for phosphate plus a proton across the inner membrane of mitochondria, a process driven by mitochondrial motive force with an overall impact on glycolysis, glutaminolysis and glutathione-dependent redox balance. Continuous export of oxaloacetate and related four-carbon dicarboxylates from mitochondrial matrix into the cytosol negatively regulates the oxidation of acetyl-CoA substrates via the Krebs cycle lowering the ATP/ADP ratio and reactive oxygen species (ROS) production. May mediate inducible proton entry into the mitochondrial matrix affecting ATP turnover as a protection mechanism against oxidative stress. The proton currents are most likely associated with fatty acid flipping across the inner membrane of mitochondria in a metabolic process regulated by free fatty acids and purine nucleotides. Regulates the use of glucose as a source of energy. Required for glucose-induced DRP1-dependent mitochondrial fission and neuron activation in the ventromedial nucleus of the hypothalamus (VMH). This mitochondrial adaptation mechanism modulates the VMH pool of glucose-excited neurons with an impact on systemic glucose homeostasis. Regulates ROS levels and metabolic reprogramming of macrophages during the resolution phase of inflammation. Attenuates ROS production in response to IL33 to preserve the integrity of the Krebs cycle required for persistent production of itaconate and subsequent GATA3-dependent differentiation of inflammation-resolving alternatively activated macrophages. Can unidirectionally transport anions including L-malate, L-aspartate, phosphate and chloride ions. Does not mediate adaptive thermogenesis. This is Dicarboxylate carrier UCP2 (Ucp2) from Rattus norvegicus (Rat).